A 441-amino-acid chain; its full sequence is Protein eva-1 homolog C (441 aa).

Positions 1 to 23 (MLLPGRARQPPTPQPVQHPGLRR) are disordered. The N-terminal stretch at 1-48 (MLLPGRARQPPTPQPVQHPGLRRQVEPPGQLLRLFYCTVLVCSKEISA) is a signal peptide. Over 49 to 322 (LTDFSGYLTK…AYIRAHPERA (274 aa)) the chain is Extracellular. The N-linked (GlcNAc...) asparagine glycan is linked to asparagine 62. Residues 67–159 (ACDGDYLNLQ…KYLLVSFKCQ (93 aa)) form the SUEL-type lectin 1 domain. An N-linked (GlcNAc...) asparagine glycan is attached at asparagine 165. Positions 168 to 260 (VCEDQELKLH…KYLTVTYACV (93 aa)) constitute an SUEL-type lectin 2 domain. The helical transmembrane segment at 323–343 (ALLFVSSVCIGLALTLCALVI) threads the bilayer. Over 344–441 (RESCAKDFRD…SLPRNMGQFY (98 aa)) the chain is Cytoplasmic. The interval 362–390 (VPGSDKVEEDSEDEEEEEDPSESDFPGEL) is disordered. Over residues 368 to 383 (VEEDSEDEEEEEDPSE) the composition is skewed to acidic residues.

The protein belongs to the EVA1 family. Ubiquitous.

Its subcellular location is the membrane. Its function is as follows. Binds heparin. This Homo sapiens (Human) protein is Protein eva-1 homolog C (EVA1C).